We begin with the raw amino-acid sequence, 461 residues long: Photosystem II CP43 reaction center protein (461 aa).

Residues 1 to 2 (ME) constitute a propeptide that is removed on maturation. T3 is subject to N-acetylthreonine. Phosphothreonine is present on T3. The next 5 helical transmembrane spans lie at 57–81 (LFEVAHFVPEKPMYEQGLILLPHLA), 122–143 (LIGPETLEESFPFFGYVWKDKS), 166–188 (KSVYFGGVYDTWAPGGGDVRKIT), 243–263 (KPFAWARRAFVWSGEAYLSYS), and 279–300 (WFNNTAYPSEFYGPTGPEASQA). E355 serves as a coordination point for [CaMn4O5] cluster. Residues 435 to 459 (RARAAAAGFEKGIDRDTEPVLSMTP) traverse the membrane as a helical segment.

This sequence belongs to the PsbB/PsbC family. PsbC subfamily. As to quaternary structure, PSII is composed of 1 copy each of membrane proteins PsbA, PsbB, PsbC, PsbD, PsbE, PsbF, PsbH, PsbI, PsbJ, PsbK, PsbL, PsbM, PsbT, PsbX, PsbY, PsbZ, Psb30/Ycf12, at least 3 peripheral proteins of the oxygen-evolving complex and a large number of cofactors. It forms dimeric complexes. Requires Binds multiple chlorophylls and provides some of the ligands for the Ca-4Mn-5O cluster of the oxygen-evolving complex. It may also provide a ligand for a Cl- that is required for oxygen evolution. PSII binds additional chlorophylls, carotenoids and specific lipids. as cofactor.

The protein resides in the plastid. It is found in the chloroplast thylakoid membrane. Its function is as follows. One of the components of the core complex of photosystem II (PSII). It binds chlorophyll and helps catalyze the primary light-induced photochemical processes of PSII. PSII is a light-driven water:plastoquinone oxidoreductase, using light energy to abstract electrons from H(2)O, generating O(2) and a proton gradient subsequently used for ATP formation. The chain is Photosystem II CP43 reaction center protein from Psilotum nudum (Whisk fern).